A 1450-amino-acid polypeptide reads, in one-letter code: Sister chromatid cohesion protein PDS5 homolog (1450 aa).

Disordered stretches follow at residues 1 to 145 (MATR…KETK), 680 to 707 (VGGSTTPTSKKSQPPQQQQQQQQQQQQQ), and 1340 to 1450 (LPPL…EVEN). A compositionally biased stretch (acidic residues) spans 45-59 (DDGELDSDIDEEDES). Residues 77–138 (KTQQQPQKSI…TSSSSQQSTQ (62 aa)) show a composition bias toward low complexity. The stretch at 650 to 716 (KQLFKKYLEE…QLQQPENDIE (67 aa)) forms a coiled coil. The segment covering 682-691 (GSTTPTSKKS) has biased composition (polar residues). Low complexity-rich tracts occupy residues 692-707 (QPPQQQQQQQQQQQQQ) and 1350-1363 (NNNNNNNNTNSTNN). Residues 1369–1378 (DENNNNKNDN) are compositionally biased toward basic and acidic residues. The segment covering 1387–1401 (NSTTAVPQKSIISKP) has biased composition (low complexity). Basic residues predominate over residues 1402–1427 (PAKKVSKKAAAKQKSPKKKTNKKKKQ). The span at 1430–1450 (SEEEVSSSEEEDESQDEEVEN) shows a compositional bias: acidic residues.

This sequence belongs to the PDS5 family.

Its subcellular location is the nucleus. May regulate sister chromatid cohesion during mitosis and couple it to DNA replication. The protein is Sister chromatid cohesion protein PDS5 homolog of Dictyostelium discoideum (Social amoeba).